The primary structure comprises 165 residues: Endoribonuclease YbeY (165 aa).

Histidine 131, histidine 135, and histidine 141 together coordinate Zn(2+).

It belongs to the endoribonuclease YbeY family. The cofactor is Zn(2+).

The protein resides in the cytoplasm. In terms of biological role, single strand-specific metallo-endoribonuclease involved in late-stage 70S ribosome quality control and in maturation of the 3' terminus of the 16S rRNA. The protein is Endoribonuclease YbeY of Lachnoclostridium phytofermentans (strain ATCC 700394 / DSM 18823 / ISDg) (Clostridium phytofermentans).